The primary structure comprises 213 residues: Thiamine-phosphate synthase (213 aa).

4-amino-2-methyl-5-(diphosphooxymethyl)pyrimidine is bound by residues 39–43 (QYRDK) and Asp71. Mg(2+) contacts are provided by Asp72 and Asp91. Ser108 provides a ligand contact to 4-amino-2-methyl-5-(diphosphooxymethyl)pyrimidine. 2-[(2R,5Z)-2-carboxy-4-methylthiazol-5(2H)-ylidene]ethyl phosphate is bound at residue 135–137 (TDT). A 4-amino-2-methyl-5-(diphosphooxymethyl)pyrimidine-binding site is contributed by Lys138. Residues Gly165 and 185 to 186 (VS) contribute to the 2-[(2R,5Z)-2-carboxy-4-methylthiazol-5(2H)-ylidene]ethyl phosphate site.

This sequence belongs to the thiamine-phosphate synthase family. Requires Mg(2+) as cofactor.

The catalysed reaction is 2-[(2R,5Z)-2-carboxy-4-methylthiazol-5(2H)-ylidene]ethyl phosphate + 4-amino-2-methyl-5-(diphosphooxymethyl)pyrimidine + 2 H(+) = thiamine phosphate + CO2 + diphosphate. It catalyses the reaction 2-(2-carboxy-4-methylthiazol-5-yl)ethyl phosphate + 4-amino-2-methyl-5-(diphosphooxymethyl)pyrimidine + 2 H(+) = thiamine phosphate + CO2 + diphosphate. It carries out the reaction 4-methyl-5-(2-phosphooxyethyl)-thiazole + 4-amino-2-methyl-5-(diphosphooxymethyl)pyrimidine + H(+) = thiamine phosphate + diphosphate. It functions in the pathway cofactor biosynthesis; thiamine diphosphate biosynthesis; thiamine phosphate from 4-amino-2-methyl-5-diphosphomethylpyrimidine and 4-methyl-5-(2-phosphoethyl)-thiazole: step 1/1. Its function is as follows. Condenses 4-methyl-5-(beta-hydroxyethyl)thiazole monophosphate (THZ-P) and 2-methyl-4-amino-5-hydroxymethyl pyrimidine pyrophosphate (HMP-PP) to form thiamine monophosphate (TMP). The polypeptide is Thiamine-phosphate synthase (Thermoplasma acidophilum (strain ATCC 25905 / DSM 1728 / JCM 9062 / NBRC 15155 / AMRC-C165)).